A 560-amino-acid chain; its full sequence is Bifunctional NAD(P)H-hydrate repair enzyme (560 aa).

The interval 1–241 is NAD(P)H-hydrate epimerase; that stretch reads MLSRLSERCT…WMTAPERMRV (241 aa). The YjeF N-terminal domain occupies 29–235; it reads LRDAEPAAAA…SLGLEDWMTA (207 aa). Residues 77–81 form an NADPHX 1; for epimerase activity region; the sequence is NNGGD. K(+) is bound by residues asparagine 78 and aspartate 145. Residues 149–155 form an NADPHX 1; for epimerase activity region; that stretch reads GTGICGP. Residues tyrosine 160 and aspartate 178 each contribute to the (6S)-NADPHX site. Residue serine 181 coordinates K(+). Residues 249–547 form the YjeF C-terminal domain; the sequence is LDDVYEYFGI…HRVPLIVNAS (299 aa). An ADP-dependent (S)-NAD(P)H-hydrate dehydratase region spans residues 249–560; sequence LDDVYEYFGI…PASRQRPSGQ (312 aa). Residue glycine 351 participates in (6S)-NADPHX binding. The segment at 417–423 is NADPHX 2; for dehydratase activity; sequence HPGEAAR. ADP contacts are provided by residues 454–458 and 475–484; these read KGPGT and NAGMASGGMG. (6S)-NADPHX is bound at residue aspartate 485.

In the N-terminal section; belongs to the NnrE/AIBP family. It in the C-terminal section; belongs to the NnrD/CARKD family. Requires K(+) as cofactor.

It carries out the reaction (6S)-NADHX + ADP = AMP + phosphate + NADH + H(+). It catalyses the reaction (6S)-NADPHX + ADP = AMP + phosphate + NADPH + H(+). The enzyme catalyses (6R)-NADHX = (6S)-NADHX. The catalysed reaction is (6R)-NADPHX = (6S)-NADPHX. In terms of biological role, bifunctional enzyme that catalyzes the epimerization of the S- and R-forms of NAD(P)HX and the dehydration of the S-form of NAD(P)HX at the expense of ADP, which is converted to AMP. This allows the repair of both epimers of NAD(P)HX, a damaged form of NAD(P)H that is a result of enzymatic or heat-dependent hydration. The polypeptide is Bifunctional NAD(P)H-hydrate repair enzyme (Leishmania major).